We begin with the raw amino-acid sequence, 240 residues long: Ribonuclease PH (240 aa).

Residues arginine 86 and 124 to 126 (GTR) contribute to the phosphate site.

It belongs to the RNase PH family. Homohexameric ring arranged as a trimer of dimers.

It carries out the reaction tRNA(n+1) + phosphate = tRNA(n) + a ribonucleoside 5'-diphosphate. Phosphorolytic 3'-5' exoribonuclease that plays an important role in tRNA 3'-end maturation. Removes nucleotide residues following the 3'-CCA terminus of tRNAs; can also add nucleotides to the ends of RNA molecules by using nucleoside diphosphates as substrates, but this may not be physiologically important. Probably plays a role in initiation of 16S rRNA degradation (leading to ribosome degradation) during starvation. This chain is Ribonuclease PH, found in Mannheimia succiniciproducens (strain KCTC 0769BP / MBEL55E).